A 584-amino-acid polypeptide reads, in one-letter code: Arginine--tRNA ligase (584 aa).

The 'HIGH' region motif lies at 126–136 (PNIAKEMHVGH).

The protein belongs to the class-I aminoacyl-tRNA synthetase family. As to quaternary structure, monomer.

Its subcellular location is the cytoplasm. It carries out the reaction tRNA(Arg) + L-arginine + ATP = L-arginyl-tRNA(Arg) + AMP + diphosphate. This chain is Arginine--tRNA ligase, found in Synechococcus sp. (strain ATCC 27144 / PCC 6301 / SAUG 1402/1) (Anacystis nidulans).